The chain runs to 100 residues: Guanine nucleotide-binding protein subunit gamma 2 (100 aa).

Met1 bears the N-acetylmethionine mark. The stretch at Thr19–Ser55 forms a coiled coil. Residues Gly21–Leu100 form the G protein gamma domain. Residues Lys90–Gly96 are regulates lipidation and cell membrane subcellular localization. Cys95 is lipidated: S-palmitoyl cysteine. Cysteine methyl ester is present on Cys97. A lipid anchor (S-farnesyl cysteine) is attached at Cys97. Positions Ser98–Leu100 are cleaved as a propeptide — removed in mature form.

G proteins are composed of 3 units, alpha, beta and gamma. GPG1 interacts with the beta subunit GB1. The dimer GB1-GG2 interacts with NDL1, NDL2 and NDL3. Binds to NUDT7. As to expression, mostly expressed in roots (excluded from the stele), seedlings (especially at the hypocotyl/root junction), floral stems, floral buds, flowers and siliques, and, to a lower extent, in leaves (restricted to guard cells). Also present in hydathods.

It localises to the cell membrane. Functionally, guanine nucleotide-binding proteins (G proteins) are involved as a modulator or transducer in various transmembrane signaling systems. The beta and gamma chains are required for the GTPase activity, for replacement of GDP by GTP, and for G protein-effector interaction. Involved in the abscisic acid (ABA) and ethylene signaling pathways. Regulates basipetal transport of auxin (IAA) in roots and hypocotyls, and thus modulates root architecture (e.g. lateral root formation). The heterotrimeric G-protein controls defense responses to necrotrophic and vascular fungi probably by modulating cell wall-related genes expression; involved in resistance to Plectosphaerella cucumerina. In Arabidopsis thaliana (Mouse-ear cress), this protein is Guanine nucleotide-binding protein subunit gamma 2 (GG2).